A 401-amino-acid chain; its full sequence is Imidazolonepropionase (401 aa).

The Fe(3+) site is built by histidine 66 and histidine 68. Zn(2+) is bound by residues histidine 66 and histidine 68. Positions 75, 138, and 171 each coordinate 4-imidazolone-5-propanoate. Tyrosine 138 is an N-formimidoyl-L-glutamate binding site. A Fe(3+)-binding site is contributed by histidine 236. Residue histidine 236 coordinates Zn(2+). Glutamine 239 serves as a coordination point for 4-imidazolone-5-propanoate. Aspartate 311 contributes to the Fe(3+) binding site. Aspartate 311 provides a ligand contact to Zn(2+). N-formimidoyl-L-glutamate contacts are provided by asparagine 313 and glycine 315. Threonine 316 is a 4-imidazolone-5-propanoate binding site.

This sequence belongs to the metallo-dependent hydrolases superfamily. HutI family. It depends on Zn(2+) as a cofactor. Fe(3+) is required as a cofactor.

It is found in the cytoplasm. The catalysed reaction is 4-imidazolone-5-propanoate + H2O = N-formimidoyl-L-glutamate. It participates in amino-acid degradation; L-histidine degradation into L-glutamate; N-formimidoyl-L-glutamate from L-histidine: step 3/3. Functionally, catalyzes the hydrolytic cleavage of the carbon-nitrogen bond in imidazolone-5-propanoate to yield N-formimidoyl-L-glutamate. It is the third step in the universal histidine degradation pathway. In Acinetobacter baumannii (strain AB307-0294), this protein is Imidazolonepropionase.